The chain runs to 403 residues: Farnesyl pyrophosphate synthase (403 aa).

Residues D156 and D160 each contribute to the Mg(2+) site. A DDXXD motif motif is present at residues 156–160 (DDLAD).

The protein belongs to the FPP/GGPP synthase family. Mg(2+) serves as cofactor.

It carries out the reaction isopentenyl diphosphate + (2E)-geranyl diphosphate = (2Z,6E)-farnesyl diphosphate + diphosphate. It functions in the pathway pheromone biosynthesis. Functionally, farnesyl pyrophosphate synthase involved in pheromone biosynthesis by catalyzing the formation of (2Z,6E)-farnesyl diphosphate. The sequence is that of Farnesyl pyrophosphate synthase from Nezara viridula (Southern green stink bug).